Consider the following 286-residue polypeptide: 4-diphosphocytidyl-2-C-methyl-D-erythritol kinase (286 aa).

Residue lysine 13 is part of the active site. 99 to 109 (PMGGGLGGGSS) is an ATP binding site. Residue aspartate 141 is part of the active site.

The protein belongs to the GHMP kinase family. IspE subfamily.

The enzyme catalyses 4-CDP-2-C-methyl-D-erythritol + ATP = 4-CDP-2-C-methyl-D-erythritol 2-phosphate + ADP + H(+). It functions in the pathway isoprenoid biosynthesis; isopentenyl diphosphate biosynthesis via DXP pathway; isopentenyl diphosphate from 1-deoxy-D-xylulose 5-phosphate: step 3/6. Catalyzes the phosphorylation of the position 2 hydroxy group of 4-diphosphocytidyl-2C-methyl-D-erythritol. This is 4-diphosphocytidyl-2-C-methyl-D-erythritol kinase from Herminiimonas arsenicoxydans.